Consider the following 363-residue polypeptide: Spermatogenesis-associated protein 22 (363 aa).

4 stretches are compositionally biased toward polar residues: residues 1–12, 30–48, 98–108, and 140–157; these read MKRSLNENSARS, QPLTSNPLKDDSGISTPSD, IQSNTGRSQGG, and NDGKNSCPVSSGAQQQKQ. Disordered regions lie at residues 1–51, 98–127, and 140–170; these read MKRS…DNYD, IQSNTGRSQGGWSYRDGNKNTSLKTWNKND, and NDGKNSCPVSSGAQQQKQLRIPEPPNLSRNK.

Component of a multiprotein complex with MEIOB and RPA2. Interacts with MEIOB. Interacts with the complex BRME1:HSF2BP:BRCA2. As to expression, highly expressed in adult testis.

It localises to the chromosome. Its function is as follows. Meiosis-specific protein required for homologous recombination in meiosis I. This chain is Spermatogenesis-associated protein 22, found in Homo sapiens (Human).